The sequence spans 148 residues: Wheatwin-2 (148 aa).

An N-terminal signal peptide occupies residues 1–23 (MTMAARLMLVAALLCAAAAAATA). Q24 carries the post-translational modification Pyrrolidone carboxylic acid. In terms of domain architecture, Barwin spans 24–148 (QQATNVRATY…VNYQFVDCRD (125 aa)). 3 disulfide bridges follow: C54-C86, C75-C109, and C89-C146.

Monomer.

Functionally, shows antifungal activity towards B.cinerea and towards the wheat-specific pathogenic fungi F.culmorum and F.graminearum (groups 1 and 2). The chain is Wheatwin-2 (PR4B) from Triticum aestivum (Wheat).